The chain runs to 418 residues: UDP-N-acetylglucosamine 1-carboxyvinyltransferase (418 aa).

Phosphoenolpyruvate is bound at residue 22–23; that stretch reads KN. Residue Arg92 coordinates UDP-N-acetyl-alpha-D-glucosamine. Cys116 serves as the catalytic Proton donor. A 2-(S-cysteinyl)pyruvic acid O-phosphothioketal modification is found at Cys116. Residues 121 to 125, Asp305, and Leu327 each bind UDP-N-acetyl-alpha-D-glucosamine; that span reads RPIDL.

It belongs to the EPSP synthase family. MurA subfamily.

It is found in the cytoplasm. The enzyme catalyses phosphoenolpyruvate + UDP-N-acetyl-alpha-D-glucosamine = UDP-N-acetyl-3-O-(1-carboxyvinyl)-alpha-D-glucosamine + phosphate. It participates in cell wall biogenesis; peptidoglycan biosynthesis. Its function is as follows. Cell wall formation. Adds enolpyruvyl to UDP-N-acetylglucosamine. This Campylobacter jejuni subsp. jejuni serotype O:23/36 (strain 81-176) protein is UDP-N-acetylglucosamine 1-carboxyvinyltransferase.